The following is a 240-amino-acid chain: MTQLALVIDLNVCVGCHACVTSCKEWNTSGWAGPLVDQNPYEGSPTGTFFNRVQTFEIGTFPNTETVHFPKSCLHCEEPPCVPVCPTGASYKRPDNGVVLVDYDKCIGCKYCSWACPYGARELDAQQKVMKKCTLCIDRITDAKLSERDRKPSCVLACPANARLFGDVHDPDSEVSIAIRERGGYQLMPEWGTKPANHYLPRRKTRMHIDPEELTRVDNPWRKEDLTDYTGEETLDDVAW.

3 4Fe-4S ferredoxin-type domains span residues 4 to 34 (LALV…WAGP), 64 to 95 (TETV…KRPD), and 97 to 126 (GVVL…LDAQ). Residues C13, C16, C19, C23, C73, C76, C81, C85, C106, C109, C112, and C116 each coordinate [4Fe-4S] cluster.

As to quaternary structure, forms a heterotrimeric membrane-bound complex composed of a catalytic heterodimer (SoeAB) and a membrane anchor protein (SoeC). It depends on [4Fe-4S] cluster as a cofactor.

The protein resides in the cell inner membrane. Its function is as follows. Part of the SoeABC complex that catalyzes the oxidation of sulfite to sulfate. SoeB is probably the electron transfer subunit. This is Sulfite dehydrogenase subunit B from Allochromatium vinosum (strain ATCC 17899 / DSM 180 / NBRC 103801 / NCIMB 10441 / D) (Chromatium vinosum).